A 503-amino-acid polypeptide reads, in one-letter code: Cardiolipin synthase (503 aa).

3 helical membrane passes run leucine 5–leucine 25, valine 30–phenylalanine 50, and leucine 59–phenylalanine 79. 2 PLD phosphodiesterase domains span residues isoleucine 238 to tyrosine 265 and asparagine 416 to serine 443. Residues histidine 243, lysine 245, aspartate 250, histidine 421, lysine 423, and aspartate 428 contribute to the active site.

Belongs to the phospholipase D family. Cardiolipin synthase subfamily.

The protein resides in the cell membrane. It catalyses the reaction 2 a 1,2-diacyl-sn-glycero-3-phospho-(1'-sn-glycerol) = a cardiolipin + glycerol. Catalyzes the reversible phosphatidyl group transfer from one phosphatidylglycerol molecule to another to form cardiolipin (CL) (diphosphatidylglycerol) and glycerol. The sequence is that of Cardiolipin synthase (cls) from Alkalihalophilus pseudofirmus (strain ATCC BAA-2126 / JCM 17055 / OF4) (Bacillus pseudofirmus).